A 157-amino-acid chain; its full sequence is Succinate dehydrogenase assembly factor 2-A, mitochondrial (157 aa).

The protein belongs to the SDHAF2 family. As to quaternary structure, interacts with the flavoprotein subunit within the SDH catalytic dimer.

The protein resides in the mitochondrion matrix. Plays an essential role in the assembly of succinate dehydrogenase (SDH), an enzyme complex (also referred to as respiratory complex II) that is a component of both the tricarboxylic acid (TCA) cycle and the mitochondrial electron transport chain, and which couples the oxidation of succinate to fumarate with the reduction of ubiquinone (coenzyme Q) to ubiquinol. Required for flavinylation (covalent attachment of FAD) of the flavoprotein subunit of the SDH catalytic dimer. The chain is Succinate dehydrogenase assembly factor 2-A, mitochondrial from Drosophila willistoni (Fruit fly).